The sequence spans 307 residues: UDP-3-O-acyl-N-acetylglucosamine deacetylase (307 aa).

Zn(2+) is bound by residues histidine 80, histidine 239, and aspartate 243. The active-site Proton donor is histidine 266.

Belongs to the LpxC family. Requires Zn(2+) as cofactor.

It carries out the reaction a UDP-3-O-[(3R)-3-hydroxyacyl]-N-acetyl-alpha-D-glucosamine + H2O = a UDP-3-O-[(3R)-3-hydroxyacyl]-alpha-D-glucosamine + acetate. It functions in the pathway glycolipid biosynthesis; lipid IV(A) biosynthesis; lipid IV(A) from (3R)-3-hydroxytetradecanoyl-[acyl-carrier-protein] and UDP-N-acetyl-alpha-D-glucosamine: step 2/6. In terms of biological role, catalyzes the hydrolysis of UDP-3-O-myristoyl-N-acetylglucosamine to form UDP-3-O-myristoylglucosamine and acetate, the committed step in lipid A biosynthesis. The sequence is that of UDP-3-O-acyl-N-acetylglucosamine deacetylase from Neisseria gonorrhoeae (strain ATCC 700825 / FA 1090).